Reading from the N-terminus, the 168-residue chain is Mitochondrial import inner membrane translocase subunit TIM14 (168 aa).

The segment covering 1–12 has biased composition (polar residues); the sequence is MSSQSNTGNSIE. The segment at 1–29 is disordered; sequence MSSQSNTGNSIEAPQLPIPGQTNGSANVT. Over 1 to 65 the chain is Mitochondrial intermembrane; it reads MSSQSNTGNS…QALNYMGEHP (65 aa). Residues 66-83 form a helical membrane-spanning segment; sequence VITGFGAFLTLYFTAGAY. Residues 84–168 lie on the Mitochondrial matrix side of the membrane; it reads KSISKGLNGG…DFLEKRGISK (85 aa). Positions 112–168 constitute a J domain; sequence EALQILNLTENTLTKKKLKEVHRKIMLANHPDKGGSPFLATKINEAKDFLEKRGISK.

This sequence belongs to the TIM14 family. In terms of assembly, homodimer and heterodimer with PAM16/TIM16. Homodimerization may not be relevant in vivo, while heterodimerization is essential for activity regulation of mtHSP70. Component of the PAM complex, at least composed of mtHsp70, MGE1, TIM44, PAM16, PAM17 and PAM18/TIM14. Interacts directly with mtHsp70. Interacts directly with TIM17 subunit of the TIM23 complex.

It localises to the mitochondrion inner membrane. In terms of biological role, essential component of the PAM complex, a complex required for the translocation of transit peptide-containing proteins from the inner membrane into the mitochondrial matrix in an ATP-dependent manner. In the complex, it is required to stimulate activity of mtHSP70 (SSC1). The chain is Mitochondrial import inner membrane translocase subunit TIM14 (PAM18) from Saccharomyces cerevisiae (strain ATCC 204508 / S288c) (Baker's yeast).